The following is a 497-amino-acid chain: Latent membrane protein 2 (497 aa).

The disordered stretch occupies residues 1-108 (MGSLEMVPMG…PPYSPRDDSS (108 aa)). At 1-123 (MGSLEMVPMG…EAGRGSMNPV (123 aa)) the chain is on the cytoplasmic side. Over residues 27–41 (NNSQYPSASGSSGNT) the composition is skewed to polar residues. The PPxY motif signature appears at 97–101 (PPPPY). At Tyr-112 the chain carries Phosphotyrosine; by host. The chain crosses the membrane as a helical span at residues 124-144 (CLPVIVAPYLFWLAAIAASCF). Over 145–147 (TAS) the chain is Extracellular. The chain crosses the membrane as a helical span at residues 148–168 (VSTVVTATGLALSLLLLAAVA). Over 169 to 177 (SSYAAAQRK) the chain is Cytoplasmic. The chain crosses the membrane as a helical span at residues 178–198 (LLTPVTVLTAVVTFFAICLTW). Topologically, residues 199–211 (RIEDPPFNSLLFA) are extracellular. Residues 212 to 232 (LLAAAGGLQGIYVLVMLVLLI) form a helical membrane-spanning segment. Residues 233–241 (LAYRRRWRR) are Cytoplasmic-facing. Residues 242 to 262 (LTVCGGIMFLACVLVLIVDAV) traverse the membrane as a helical segment. Topologically, residues 263–267 (LQLSP) are extracellular. A helical membrane pass occupies residues 268–288 (LLGAVTVVSMTLLLLAFVLWL). Topologically, residues 289-296 (SSPGGLGT) are cytoplasmic. The helical transmembrane segment at 297 to 317 (LGAALLTLAAALALLASLILG) threads the bilayer. Thr-318 is a topological domain (extracellular). A helical membrane pass occupies residues 319–339 (LNLTTMFLLMLLWTLVVLLIC). The Cytoplasmic portion of the chain corresponds to 340-354 (SSCSSCPLSKILLAR). The helical transmembrane segment at 355-375 (LFLYALALLLLASALIAGGSI) threads the bilayer. The Extracellular segment spans residues 376-388 (LQTNFKSLSSTEF). Residues 389-409 (IPNLFCMLLLIVAGILFILAI) form a helical membrane-spanning segment. Residues 410-422 (LTEWGSGNRTYGP) lie on the Cytoplasmic side of the membrane. A helical membrane pass occupies residues 423-443 (VFMCLGGLLTMVAGAVWLTVM). Residues 444 to 449 (SNTLLS) are Extracellular-facing. The helical transmembrane segment at 450–470 (AWILTAGFLIFLIGFALFGVI) threads the bilayer. The Cytoplasmic segment spans residues 471–497 (RCCRYCCYYCLTLESEERPPTPYRNTV).

It belongs to the herpesviridae LMP-2 family. As to quaternary structure, the cytoplasmic N-terminal domain interacts with human SRC family protein tyrosine kinases SYK and LYN. Binds human ITCH, WWP2 and NEDD4L. Post-translationally, phosphorylated on cytoplasmic N-terminal tyrosine residues, possibly by human LYN. In terms of processing, can be ubiquitinated by human ITCH and WWP2 on the N-terminus in a lysine-independent manner.

It localises to the host cell membrane. The protein resides in the host endomembrane system. Its subcellular location is the host cytoplasm. It is found in the host perinuclear region. In terms of biological role, maintains EBV latent infection of B-lymphocyte, by preventing lytic reactivation of the virus in response to surface immunoglobulin (sIg) cross-linking. Acts like a dominant negative inhibitor of the sIg-associated protein tyrosine kinases, LYN and SYK. Also blocks translocation of the B-cell antigen receptor (BCR) into lipid rafts, preventing the subsequent signaling and accelerated internalization of the BCR upon BCR cross-linking. Serves as a molecular scaffold to recruit SYK, LYN and E3 protein-ubiquitin ligases, such as ITCH and NEDD4L, leading to ubiquitination and potential degradation of both tyrosines kinases. Possesses a constitutive signaling activity in non-transformed cells, inducing bypass of normal B lymphocyte developmental checkpoints allowing immunoglobulin-negative cells to colonize peripheral lymphoid organs. Its function is as follows. May be a negative regulator of isoform LMP2A. The chain is Latent membrane protein 2 (LMP2) from Epstein-Barr virus (strain B95-8) (HHV-4).